A 159-amino-acid chain; its full sequence is Mitotic-spindle organizing protein 2 (159 aa).

Residues 87 to 159 (LASDPQDSVP…SGKSNSRSSP (73 aa)) are disordered. Polar residues predominate over residues 91–105 (PQDSVPISLSTSTSE). Position 111 is an omega-N-methylarginine (Arg-111). Phosphoserine is present on Ser-153.

This sequence belongs to the MOZART2 family. In terms of assembly, associates with the gamma-tubulin ring complex (gTuRC) consisting of TUBGCP2, TUBGCP3, TUBGCP4, TUBGCP5 and TUBGCP6 and gamma-tubulin TUBG1 or TUBG2; within the complex, interacts with TUBGCP2; the interaction plays a role in gTuRC activation.

It is found in the cytoplasm. It localises to the cytoskeleton. The protein resides in the microtubule organizing center. The protein localises to the centrosome. Its subcellular location is the spindle. Required for the recruitment and the assembly of the gamma-tubulin ring complex (gTuRC) at the centrosome. The gTuRC regulates the minus-end nucleation of alpha-beta tubulin heterodimers that grow into microtubule protafilaments, a critical step in centrosome duplication and spindle formation. The sequence is that of Mitotic-spindle organizing protein 2 (Mzt2) from Mus musculus (Mouse).